Reading from the N-terminus, the 327-residue chain is Phenylalanine--tRNA ligase alpha subunit (327 aa).

A Mg(2+)-binding site is contributed by Glu252.

This sequence belongs to the class-II aminoacyl-tRNA synthetase family. Phe-tRNA synthetase alpha subunit type 1 subfamily. As to quaternary structure, tetramer of two alpha and two beta subunits. The cofactor is Mg(2+).

It is found in the cytoplasm. It carries out the reaction tRNA(Phe) + L-phenylalanine + ATP = L-phenylalanyl-tRNA(Phe) + AMP + diphosphate + H(+). In Yersinia pseudotuberculosis serotype O:1b (strain IP 31758), this protein is Phenylalanine--tRNA ligase alpha subunit.